The following is a 239-amino-acid chain: Small ribosomal subunit protein uS3 (239 aa).

Positions 39–109 (IRAMIQEIPE…KVQIKIKEVK (71 aa)) constitute a KH type-2 domain. A disordered region spans residues 219–239 (GALLKKQRRPRTEKPAQAGRQ).

This sequence belongs to the universal ribosomal protein uS3 family. As to quaternary structure, part of the 30S ribosomal subunit. Forms a tight complex with proteins S10 and S14.

Its function is as follows. Binds the lower part of the 30S subunit head. Binds mRNA in the 70S ribosome, positioning it for translation. This is Small ribosomal subunit protein uS3 from Treponema denticola (strain ATCC 35405 / DSM 14222 / CIP 103919 / JCM 8153 / KCTC 15104).